Reading from the N-terminus, the 1155-residue chain is RhoGEF domain-containing protein gxcJ (1155 aa).

Disordered regions lie at residues 114-216 (ENNS…NFLK), 259-333 (LNKK…IPSN), 429-460 (LVSQ…DSLE), 484-508 (LNNE…TTTT), and 604-639 (SNSN…NNYQ). Composition is skewed to low complexity over residues 115–153 (NNSI…TNNN), 161–211 (TITN…NNNN), and 260–303 (NKKS…NNNN). A coiled-coil region spans residues 192–257 (NNNNNNNNNN…KDIEKLNSAL (66 aa)). Residues 304–319 (YKPTITSSQTQPSLME) show a composition bias toward polar residues. Over residues 320-330 (NSKDIDKKEKI) the composition is skewed to basic and acidic residues. A compositionally biased stretch (low complexity) spans 441–457 (FLASASSSSTTTITTTD). Low complexity predominate over residues 604-637 (SNSNSSNNNNSNSNNITNSNSSSFSKKNSNNNNN). The 175-residue stretch at 700-874 (HRTNLIKEIL…EKIVGTINSQ (175 aa)) folds into the DH domain. The tract at residues 1084-1155 (SHRLSIPSTS…LVKSLVNIKT (72 aa)) is disordered. Low complexity-rich tracts occupy residues 1093–1121 (SSPN…GSPN) and 1128–1137 (QQQQLQQQQQ).

In terms of biological role, GTPase-activating protein. In Dictyostelium discoideum (Social amoeba), this protein is RhoGEF domain-containing protein gxcJ (gxcJ).